Reading from the N-terminus, the 236-residue chain is Alpha-S2-casein (236 aa).

Positions 1-15 (MKFFIFTCLLAVALA) are cleaved as a signal peptide. Phosphoserine occurs at positions 23, 24, 25, 28, 47, 80, 81, 82, 85, 157, and 169. The tract at residues 72–93 (PTEVYSSSSSSEESAKFPTERE) is disordered. Positions 84–93 (ESAKFPTERE) are enriched in basic and acidic residues.

This sequence belongs to the alpha-casein family. In terms of processing, there are at least three different forms found in milk, with varying degrees of phosphorylation. These include form 10-P which is phosphorylated at ten sites that have not been determined, form 11-P which is phosphorylated at eleven sites and form 12-P which is phosphorylated at twelve sites. Mammary gland specific. Secreted in milk.

It localises to the secreted. Important role in the capacity of milk to transport calcium phosphate. This is Alpha-S2-casein from Equus asinus (Donkey).